The chain runs to 351 residues: Divinyl chlorophyll a/b light-harvesting protein PcbC (351 aa).

6 helical membrane passes run 27 to 47, 64 to 84, 89 to 109, 203 to 223, 244 to 264, and 306 to 326; these read FIAA…AFTL, LICL…GVIT, CTVI…GGLL, VMGG…FHIA, VLSY…FWCA, and LSNV…WHAL.

The protein belongs to the PsbB/PsbC family. IsiA/Pcb subfamily. As to quaternary structure, the antenna complex consists of divinyl chlorophylls (a and b) and divinyl chlorophyll a/b binding proteins and binds more divinyl chlorophyll b than does the antenna complex from high-light-adapted Prochlorococcus. Divinyl chlorophyll a serves as cofactor. The cofactor is divinyl chlorophyll b.

Its subcellular location is the cellular thylakoid membrane. The antenna complex functions as a light receptor, it captures and delivers excitation energy to photosystems II and I. The Prochlorales pcb genes are not related to higher plant LHCs. This Prochlorococcus marinus (strain SARG / CCMP1375 / SS120) protein is Divinyl chlorophyll a/b light-harvesting protein PcbC (pcbC).